Here is a 352-residue protein sequence, read N- to C-terminus: Photosystem II D2 protein (352 aa).

The Cytoplasmic portion of the chain corresponds to 1-31 (MTIAIGRAPAERGWFDILDDWLKRDRFVFVG). The helical transmembrane segment at 32–53 (WSGILLFPCAYLALGGWLTGTT) threads the bilayer. Residues 54–108 (FVTSWYTHGLASSYLEGCNFLTVAVSTPANSMGHSLLLLWGPEAQGDFTRWCQLG) lie on the Lumenal side of the membrane. Residues 109–131 (GLWTFIALHGAFGLIGFMLRQFE) traverse the membrane as a helical segment. H117 provides a ligand contact to chlorophyll a. Residue Q129 participates in pheophytin a binding. Over 132 to 140 (IARLVGVRP) the chain is Cytoplasmic. Residues 141-160 (YNAIAFSAPIAVFVSVFLIY) traverse the membrane as a helical segment. Pheophytin a is bound at residue N142. Residues 161–193 (PLGQSSWFFAPSFGVAAIFRFLLFFQGFHNWTL) lie on the Lumenal side of the membrane. The helical transmembrane segment at 194–217 (NPFHMMGVAGVLGGALLCAIHGAT) threads the bilayer. Position 197 (H197) interacts with chlorophyll a. Residues H214 and F261 each contribute to the a plastoquinone site. H214 serves as a coordination point for Fe cation. Topologically, residues 218–265 (VENTLFQDGEGASTFRAFNPTQAEETYSMVTANRFWSQIFGIAFSNKR) are cytoplasmic. A helical membrane pass occupies residues 266–288 (WLHFFMLFVPVTGLWMSAIGVVG). Residue H268 participates in Fe cation binding. Residues 289–352 (LALNLRSYDF…EEVLPRGNAL (64 aa)) are Lumenal-facing.

It belongs to the reaction center PufL/M/PsbA/D family. In terms of assembly, PSII is composed of 1 copy each of membrane proteins PsbA, PsbB, PsbC, PsbD, PsbE, PsbF, PsbH, PsbI, PsbJ, PsbK, PsbL, PsbM, PsbT, PsbX, PsbY, PsbZ, Psb30/Ycf12, peripheral proteins PsbO, CyanoQ (PsbQ), PsbU, PsbV and a large number of cofactors. It forms dimeric complexes. Part of a photosystem II (PSII) assembly intermediate complex PSII-I; crystallized from a strain deleted of psbJ, it forms monomeric PSII before addition of the oxygen evolving complex. PSII-I includes 3 assembly factors not found in mature PSII (Psb27, Psb28 and Psb34). The cofactor is The D1/D2 heterodimer binds P680, chlorophylls that are the primary electron donor of PSII, and subsequent electron acceptors. It shares a non-heme iron and each subunit binds pheophytin, quinone, additional chlorophylls, carotenoids and lipids. There is also a Cl(-1) ion associated with D1 and D2, which is required for oxygen evolution. PSII binds additional chlorophylls, carotenoids and specific lipids..

The protein resides in the cellular thylakoid membrane. The catalysed reaction is 2 a plastoquinone + 4 hnu + 2 H2O = 2 a plastoquinol + O2. In terms of biological role, photosystem II (PSII) is a light-driven water:plastoquinone oxidoreductase that uses light energy to abstract electrons from H(2)O, generating O(2) and a proton gradient subsequently used for ATP formation. It consists of a core antenna complex that captures photons, and an electron transfer chain that converts photonic excitation into a charge separation. The D1/D2 (PsbA/PsbD) reaction center heterodimer binds P680, the primary electron donor of PSII as well as several subsequent electron acceptors. D2 is needed for assembly of a stable PSII complex. The sequence is that of Photosystem II D2 protein from Thermosynechococcus vestitus (strain NIES-2133 / IAM M-273 / BP-1).